We begin with the raw amino-acid sequence, 488 residues long: MMFTKSTALALAAIVALSNVNAFSTSIHQPITSKAAHITSSSSLQAANNGLDTDTTLPSFSTKEEYTSYLQKAGRLPSGFAVGTAKGTFVSVEAPALGPLPIKATVIHLTEGPTDSWAAVFTKQSGCPVKVGKARLSGGHPLQALVINNKVSNVCPGGDGIAAAESVCAAVASSLNLPGGANSVLPSSTGVIGWRLPAKELAEDVAPRAIEALQTESAYAAAEAIMTTDRYPKLRSKTLSDGVRVVGVAKGAGMIEPNMATMLGYIMTDATIEKSKLQTMLTEACNRSFNSISVDGDESTSDTVVAIASGLKPLSSEDELKDALFEVCEGLSADLVRNGEGTGHVIRVTISNFPGSEYDARRMGRHLVNSPLVKCAISGNDPNTGRIAGAIGSFMGKFFPTESVAEMSLTLGGRTIFNNGQFVLEGDAVEKELSGHMSDAQLGEHDDFPKHQKFVEIGVDFGGSGSDVIVLGSDLTKEYVEVNADYRS.

Residues Thr227, Lys250, Thr261, Glu340, Asn483, and Ser488 each coordinate substrate. Residue Thr261 is the Nucleophile of the active site.

This sequence belongs to the ArgJ family. Heterodimer of an alpha and a beta chain. The alpha and beta chains are autoproteolytically processed from a single precursor protein within the mitochondrion.

Its subcellular location is the mitochondrion matrix. The catalysed reaction is N(2)-acetyl-L-ornithine + L-glutamate = N-acetyl-L-glutamate + L-ornithine. It carries out the reaction L-glutamate + acetyl-CoA = N-acetyl-L-glutamate + CoA + H(+). The protein operates within amino-acid biosynthesis; L-arginine biosynthesis; L-ornithine and N-acetyl-L-glutamate from L-glutamate and N(2)-acetyl-L-ornithine (cyclic): step 1/1. It participates in amino-acid biosynthesis; L-arginine biosynthesis; N(2)-acetyl-L-ornithine from L-glutamate: step 1/4. Its function is as follows. Catalyzes two activities which are involved in the cyclic version of arginine biosynthesis: the synthesis of acetylglutamate from glutamate and acetyl-CoA, and of ornithine by transacetylation between acetylornithine and glutamate. The sequence is that of Arginine biosynthesis bifunctional protein ArgJ, mitochondrial from Thalassiosira pseudonana (Marine diatom).